The sequence spans 333 residues: Homeobox protein SIX3 (333 aa).

The span at 57 to 71 (GGAGGAGGGSGGGGS) shows a compositional bias: gly residues. Disordered stretches follow at residues 57–76 (GGAG…APPE), 233–252 (NPSK…TQVG), and 259–333 (RQRD…ECDV). The segment at 73-120 (APPEELSMFQLPTLNFSPEQVASVCETLEETGDIERLGRFLWSLPVAP) is interaction with TLE5. A DNA-binding region (homeobox) is located at residues 207–266 (GEQKTHCFKERTRSLLREWYLQDPYPNPSKKRELAQATGLTPTQVGNWFKNRRQRDRAAA). A bind to RHO promoter region spans residues 233–235 (NPS). Low complexity predominate over residues 294–310 (SAESPSTAASPTTSVSS). The segment covering 317–333 (TGTSILSVTSSDSECDV) has biased composition (polar residues).

This sequence belongs to the SIX/Sine oculis homeobox family. As to quaternary structure, interacts with EYA4; translocates EYA4 from the cytoplasm to the nucleus and promotes activation of their target genes. Interacts with MTA1 and HDAC2; represses its own transcription. Interacts with MTA1; facilitates the binding of SIX3 to the core DNA motif of SIX3 promoter. Interacts with EYA1; promotes EYA1 translocation to the nucleus. Interacts with TLE1 and TLE5 (via Q domain); can act in combination with either TLE1 and/or TLE5 leading to transcriptional repression or activation, respectively. Interacts (via homeobox) with NR4A3; differentially regulates the transcriptional activities NR4A3. Interacts with GMNN. Interacts with TLE4. In terms of tissue distribution, expressed in ependymal cells during the formation of the lateral wall.

The protein localises to the nucleus. Transcriptional regulator which can act as both a transcriptional repressor and activator by binding a ATTA homeodomain core recognition sequence on these target genes. During forebrain development represses WNT1 expression allowing zona limitans intrathalamica formation and thereby ensuring proper anterio-posterior patterning of the diencephalon and formation of the rostral diencephalon. Acts as a direct upstream activator of SHH expression in the rostral diencephalon ventral midline and that in turn SHH maintains its expression. In addition, Six3 activity is required for the formation of the telencephalon. During postnatal stages of brain development is necessary for ependymal cell maturation by promoting the maturation of radial glia into ependymal cells through regulation of neuroblast proliferation and migration. Acts on the proliferation and differentiation of neural progenitor cells through activating transcription of CCND1 AND CCND2. During early lens formation plays a role in lens induction and specification by activating directly PAX6 in the presumptive lens ectoderm. In turn PAX6 activates SIX3 resulting in activation of PDGFRA and CCND1 promoting cell proliferation. Also is required for the neuroretina development by directly suppressing WNT8B expression in the anterior neural plate territory. Its action during retina development and lens morphogenesis is TLE5 and TLE4-dependent manner. Furthermore, during eye development regulates several genes expression. Before and during early lens development represses the CRYGF promoter by binding a SIX repressor element. Directly activates RHO transcription, or cooperates with CRX or NRL. Six3 also functions in the formation of the proximodistal axis of the optic cup, and promotes the formation of optic vesicles-like structures. During pituitary development, acts in parallel or alternatively with HESX1 to control cell proliferation through Wnt/beta-catenin pathway. Plays a role in eye development by suppressing WNT1 expression and in dorsal-ventral patterning by repressing BMP signaling pathway. This Mus musculus (Mouse) protein is Homeobox protein SIX3 (Six3).